The following is a 212-amino-acid chain: Orotate phosphoribosyltransferase (212 aa).

5-phospho-alpha-D-ribose 1-diphosphate is bound by residues arginine 95, lysine 99, histidine 101, and 121 to 129 (DDLITTGGS). Threonine 125 is an orotate binding site.

The protein belongs to the purine/pyrimidine phosphoribosyltransferase family. PyrE subfamily. As to quaternary structure, homodimer. The cofactor is Mg(2+).

The enzyme catalyses orotidine 5'-phosphate + diphosphate = orotate + 5-phospho-alpha-D-ribose 1-diphosphate. It participates in pyrimidine metabolism; UMP biosynthesis via de novo pathway; UMP from orotate: step 1/2. In terms of biological role, catalyzes the transfer of a ribosyl phosphate group from 5-phosphoribose 1-diphosphate to orotate, leading to the formation of orotidine monophosphate (OMP). The chain is Orotate phosphoribosyltransferase from Lactobacillus johnsonii (strain CNCM I-12250 / La1 / NCC 533).